Reading from the N-terminus, the 153-residue chain is Mitochondrial fission 1 protein (153 aa).

Over 1–127 the chain is Cytoplasmic; that stretch reads MFGKSTYPAL…SIHEKVTQEG (127 aa). The stretch at 76 to 109 is one TPR repeat; the sequence is RECLYYLALGSYKIGDYSNATRYADTLLKNEPEN. The helical transmembrane segment at 128 to 148 threads the bilayer; the sequence is LIGIGIAGGALAVGVGILGAL. The Mitochondrial intermembrane segment spans residues 149 to 153; the sequence is LRKKR.

This sequence belongs to the FIS1 family.

Its subcellular location is the mitochondrion outer membrane. Its function is as follows. Has a role in mitochondrial fission. Has a role in outer membrane fission but not matrix separation. In Debaryomyces hansenii (strain ATCC 36239 / CBS 767 / BCRC 21394 / JCM 1990 / NBRC 0083 / IGC 2968) (Yeast), this protein is Mitochondrial fission 1 protein (FIS1).